A 211-amino-acid polypeptide reads, in one-letter code: Ribonuclease HII (211 aa).

The 190-residue stretch at Glu11–Ser200 folds into the RNase H type-2 domain. 3 residues coordinate a divalent metal cation: Asp17, Glu18, and Asp109.

The protein belongs to the RNase HII family. Requires Mn(2+) as cofactor. It depends on Mg(2+) as a cofactor.

It is found in the cytoplasm. It carries out the reaction Endonucleolytic cleavage to 5'-phosphomonoester.. Functionally, endonuclease that specifically degrades the RNA of RNA-DNA hybrids. The chain is Ribonuclease HII from Histophilus somni (strain 2336) (Haemophilus somnus).